The following is a 560-amino-acid chain: Oxygen-dependent choline dehydrogenase (560 aa).

An FAD-binding site is contributed by 6–35 (DYIIVGAGSAGCVLADRLSESGDHSVLLLE). Histidine 470 functions as the Proton acceptor in the catalytic mechanism.

The protein belongs to the GMC oxidoreductase family. It depends on FAD as a cofactor.

The enzyme catalyses choline + A = betaine aldehyde + AH2. The catalysed reaction is betaine aldehyde + NAD(+) + H2O = glycine betaine + NADH + 2 H(+). It participates in amine and polyamine biosynthesis; betaine biosynthesis via choline pathway; betaine aldehyde from choline (cytochrome c reductase route): step 1/1. Involved in the biosynthesis of the osmoprotectant glycine betaine. Catalyzes the oxidation of choline to betaine aldehyde and betaine aldehyde to glycine betaine at the same rate. In Vibrio vulnificus (strain YJ016), this protein is Oxygen-dependent choline dehydrogenase.